Reading from the N-terminus, the 1295-residue chain is Nonribosomal peptide synthetase resC (1295 aa).

A disordered region spans residues 1-24 (MDLTTTSHARVDSGGVPFTSSLND). Residues 221 to 624 (KDVVDASPQA…EGRKDTQIKL (404 aa)) form an adenylation region. In terms of domain architecture, Carrier spans 759-836 (ESANPAEENL…DQANLLRPLV (78 aa)). Ser796 is modified (O-(pantetheine 4'-phosphoryl)serine). Positions 873-1284 (EDVYPCTPYQ…DEYSQTLHEL (412 aa)) are condensation.

This sequence belongs to the NRP synthetase family. It depends on pantetheine 4'-phosphate as a cofactor.

It carries out the reaction restrictinol + glycine + H(+) = restricticin + H2O. It participates in antifungal biosynthesis. In terms of biological role, nonribosomal peptide synthetase; part of the gene cluster that mediates the biosynthesis of the tetrahydropyranyl antifungal agent restricticin that acts as an inhibitor of CYP51 and blocks the ergosterol biosynthesis. Within the pathway, resC catalyzes the C3 esterification of restrictinol with glycine to yield restricticin. ResC represents an example of the emerging class of single-module NRPS-like enzymes that perform esterification reactions. The highly reducing polyketide synthase resH, the short chain dehydrogenase resG, the cyclase resF, the FAD-dependent monooxygenase resA and the enoylreductase resD are required to generate the first stable intermediate desmethylrestrictinol. ResH with resD biosynthesize the first polyketide chain intermediate that is reduced by resG, followed by epoxidation by resA before 6-endo cyclization via epoxide opening by resF leads to desmethylrestrictinol. The methyltransferase resE then catalyzes the C4 O-methylation of desmethylrestrictinol to produce restrictinol, and the nonribosomal peptide synthetase resC catalyzes the C3 esterification of restrictinol with glycine that leads to restricticin. This is Nonribosomal peptide synthetase resC from Aspergillus sclerotiorum.